Here is a 220-residue protein sequence, read N- to C-terminus: Protein-methionine-sulfoxide reductase heme-binding subunit MsrQ (220 aa).

5 helical membrane passes run 20 to 40 (IWLL…LGAS), 52 to 72 (EHTL…VTPI), 86 to 106 (ALGL…MVLD), 122 to 142 (PFIT…LTSN), and 159 to 179 (LVYV…KSWP).

The protein belongs to the MsrQ family. In terms of assembly, heterodimer of a catalytic subunit (MsrP) and a heme-binding subunit (MsrQ). FMN is required as a cofactor. It depends on heme b as a cofactor.

Its subcellular location is the cell inner membrane. Part of the MsrPQ system that repairs oxidized periplasmic proteins containing methionine sulfoxide residues (Met-O), using respiratory chain electrons. Thus protects these proteins from oxidative-stress damage caused by reactive species of oxygen and chlorine generated by the host defense mechanisms. MsrPQ is essential for the maintenance of envelope integrity under bleach stress, rescuing a wide series of structurally unrelated periplasmic proteins from methionine oxidation. MsrQ provides electrons for reduction to the reductase catalytic subunit MsrP, using the quinone pool of the respiratory chain. In Brucella anthropi (strain ATCC 49188 / DSM 6882 / CCUG 24695 / JCM 21032 / LMG 3331 / NBRC 15819 / NCTC 12168 / Alc 37) (Ochrobactrum anthropi), this protein is Protein-methionine-sulfoxide reductase heme-binding subunit MsrQ.